A 143-amino-acid polypeptide reads, in one-letter code: Transcriptional regulator MraZ (143 aa).

SpoVT-AbrB domains follow at residues Thr-5–Glu-47 and Ala-76–Ala-119.

This sequence belongs to the MraZ family. As to quaternary structure, forms oligomers.

The protein localises to the cytoplasm. Its subcellular location is the nucleoid. This is Transcriptional regulator MraZ from Corynebacterium diphtheriae (strain ATCC 700971 / NCTC 13129 / Biotype gravis).